Reading from the N-terminus, the 365-residue chain is Peptide chain release factor 2 (365 aa).

An N5-methylglutamine modification is found at Gln-252.

This sequence belongs to the prokaryotic/mitochondrial release factor family. Post-translationally, methylated by PrmC. Methylation increases the termination efficiency of RF2.

The protein resides in the cytoplasm. Its function is as follows. Peptide chain release factor 2 directs the termination of translation in response to the peptide chain termination codons UGA and UAA. In Escherichia coli O9:H4 (strain HS), this protein is Peptide chain release factor 2.